We begin with the raw amino-acid sequence, 301 residues long: Ribonuclease Z (301 aa).

The Zn(2+) site is built by His-61, His-63, Asp-65, His-66, His-140, Asp-211, and His-269. Catalysis depends on Asp-65, which acts as the Proton acceptor.

It belongs to the RNase Z family. In terms of assembly, homodimer. The cofactor is Zn(2+).

The enzyme catalyses Endonucleolytic cleavage of RNA, removing extra 3' nucleotides from tRNA precursor, generating 3' termini of tRNAs. A 3'-hydroxy group is left at the tRNA terminus and a 5'-phosphoryl group is left at the trailer molecule.. Its function is as follows. Zinc phosphodiesterase, which displays some tRNA 3'-processing endonuclease activity. Probably involved in tRNA maturation, by removing a 3'-trailer from precursor tRNA. The chain is Ribonuclease Z from Bradyrhizobium diazoefficiens (strain JCM 10833 / BCRC 13528 / IAM 13628 / NBRC 14792 / USDA 110).